Reading from the N-terminus, the 475-residue chain is Adenylyl cyclase-associated protein 1 (475 aa).

N-acetylalanine is present on Ala2. At Tyr31 the chain carries Phosphotyrosine. The residue at position 34 (Ser34) is a Phosphoserine. The residue at position 81 (Lys81) is an N6-acetyllysine. Disordered stretches follow at residues 216 to 237 and 278 to 319; these read ELSG…PPCP and MKTH…KKEP. Residues 218-228 are compositionally biased toward low complexity; it reads SGLPSGPSAGS. Lys287 is modified (N6-methyllysine). Phosphoserine occurs at positions 290, 295, and 301. At Thr307 the chain carries Phosphothreonine. Phosphoserine is present on residues Ser308 and Ser310. The 135-residue stretch at 319-453 folds into the C-CAP/cofactor C-like domain; that stretch reads PAVLELEGKK…EGGDFNEFPV (135 aa). Lys348 participates in a covalent cross-link: Glycyl lysine isopeptide (Lys-Gly) (interchain with G-Cter in SUMO1).

Belongs to the CAP family. Homodimer. Binds actin monomers.

The protein resides in the cell membrane. Directly regulates filament dynamics and has been implicated in a number of complex developmental and morphological processes, including mRNA localization and the establishment of cell polarity. The polypeptide is Adenylyl cyclase-associated protein 1 (CAP1) (Homo sapiens (Human)).